A 517-amino-acid polypeptide reads, in one-letter code: Ribonuclease Y (517 aa).

Residues 1-21 (MIEVVVGIGAGLIGIGAGYLV) traverse the membrane as a helical segment. The 67-residue stretch at 207–273 (LINVVNIKND…TRVIELLVED (67 aa)) folds into the KH domain. Positions 333–426 (ALAHSLEVAH…VCAADALSAA (94 aa)) constitute an HD domain.

Belongs to the RNase Y family.

Its subcellular location is the cell membrane. Functionally, endoribonuclease that initiates mRNA decay. The polypeptide is Ribonuclease Y (Campylobacter fetus subsp. fetus (strain 82-40)).